We begin with the raw amino-acid sequence, 202 residues long: Small ribosomal subunit protein uS4c (202 aa).

The S4 RNA-binding domain maps to 90–153 (MRLDNIIFRL…KSEAIISKNI (64 aa)).

The protein belongs to the universal ribosomal protein uS4 family. In terms of assembly, part of the 30S ribosomal subunit. Contacts protein S5. The interaction surface between S4 and S5 is involved in control of translational fidelity.

It is found in the plastid. Its subcellular location is the chloroplast. Functionally, one of the primary rRNA binding proteins, it binds directly to 16S rRNA where it nucleates assembly of the body of the 30S subunit. Its function is as follows. With S5 and S12 plays an important role in translational accuracy. In Leucodon sciuroides (Moss), this protein is Small ribosomal subunit protein uS4c (rps4).